Reading from the N-terminus, the 311-residue chain is MSKILVFGHQNPDTDAIASSYAFDYLAKKAFDLDTEVVALGDPNEETAFALDYFGVSAPRVVTSAKAEGASHVILTDHNEFPQSISDIREVEVYGIVDHHRVANFETANPLYMRVEPVGSASSIVYRLFKENRVDVPKDIAGLLLSGLISDTLLLKSPTTHASDHRVAVELAELAGVKLEEYGMAMLKAGTNLASKSEAELIDIDAKTFELNGNAVRVAQVNTVDIAEVLERKEAIEAAIKEVMASEGYSDFVLMITDIVNSNSEILALGANMDKVEAAFSFKLEDNHAFLAGAVSRKKQVVPQLTESFGA.

Positions 9, 13, 15, 77, 99, and 151 each coordinate Mn(2+).

Belongs to the PPase class C family. It depends on Mn(2+) as a cofactor.

The protein localises to the cytoplasm. The enzyme catalyses diphosphate + H2O = 2 phosphate + H(+). The protein is Probable manganese-dependent inorganic pyrophosphatase of Streptococcus equi subsp. zooepidemicus (strain H70).